The following is a 377-amino-acid chain: uncharacterized protein (377 aa).

Transmembrane regions (helical) follow at residues 26-46 (TFQN…VVAI), 67-87 (TVGS…WVII), 108-128 (FLTF…ISLT), and 135-155 (IDYG…ALYI).

The protein resides in the cell membrane. This is an uncharacterized protein from Methanocaldococcus jannaschii (strain ATCC 43067 / DSM 2661 / JAL-1 / JCM 10045 / NBRC 100440) (Methanococcus jannaschii).